The primary structure comprises 577 residues: Arginine--tRNA ligase (577 aa).

The 'HIGH' region signature appears at 122–132 (PNVAKEMHVGH).

It belongs to the class-I aminoacyl-tRNA synthetase family. In terms of assembly, monomer.

Its subcellular location is the cytoplasm. It carries out the reaction tRNA(Arg) + L-arginine + ATP = L-arginyl-tRNA(Arg) + AMP + diphosphate. The sequence is that of Arginine--tRNA ligase from Salmonella arizonae (strain ATCC BAA-731 / CDC346-86 / RSK2980).